Here is a 333-residue protein sequence, read N- to C-terminus: Adenosine deaminase (333 aa).

Residues histidine 12 and histidine 14 each contribute to the Zn(2+) site. Residues histidine 14, aspartate 16, and glycine 170 each coordinate substrate. Residue histidine 197 coordinates Zn(2+). The active-site Proton donor is the glutamate 200. Aspartate 278 is a Zn(2+) binding site. Aspartate 279 contacts substrate.

It belongs to the metallo-dependent hydrolases superfamily. Adenosine and AMP deaminases family. Adenosine deaminase subfamily. It depends on Zn(2+) as a cofactor.

It carries out the reaction adenosine + H2O + H(+) = inosine + NH4(+). It catalyses the reaction 2'-deoxyadenosine + H2O + H(+) = 2'-deoxyinosine + NH4(+). Its function is as follows. Catalyzes the hydrolytic deamination of adenosine and 2-deoxyadenosine. The chain is Adenosine deaminase from Edwardsiella ictaluri (strain 93-146).